The sequence spans 430 residues: MERRRITSARRSYASSETMVRGHGPTRHLGTIPRLSLSRMTPPLPARVDFSLAGALNAGFKETRASERAEMMELNDRFASYIEKVRFLEQQNKALAAELNQLRAKEPTKLADVYQAELRELRLRLDQLTTNSARLEVERDNLTQDLGTLRQKLQDETNLRLEAENNLAVYRQEADEATLARVDLERKVESLEEEIQFLRKIHEEEVRELQEQLAQQQVHVEMDVAKPDLTAALREIRTQYEAVATSNMQETEEWYRSKFADLTDVASRNAELLRQAKHEANDYRRQLQALTCDLESLRGTNESLERQMREQEERHARESASYQEALARLEEEGQSLKEEMARHLQEYQDLLNVKLALDIEIATYRKLLEGEENRITIPVQTFSNLQIRETSLDTKSVSEGHLKRNIVVKTVEMRDGEVIKESKQEHKDVM.

The disordered stretch occupies residues methionine 1–threonine 31. The segment at methionine 1–glutamate 70 is head. The residue at position 7 (threonine 7) is a Phosphothreonine; by AURKB and ROCK1. A compositionally biased stretch (polar residues) spans alanine 9 to threonine 18. At arginine 11 the chain carries Omega-N-methylarginine. Serine 12 bears the Phosphoserine mark. Omega-N-methylarginine is present on arginine 21. Position 34 is a citrulline (arginine 34). Serine 36 is modified (phosphoserine; by AURKB and ROCK1). Phosphothreonine is present on threonine 41. One can recognise an IF rod domain in the interval glutamate 67–isoleucine 375. Residues methionine 71 to leucine 102 form a coil 1A region. Serine 80 is modified (phosphoserine). Residues arginine 103 to valine 113 form a linker 1 region. 2 positions are modified to phosphothreonine: threonine 108 and threonine 148. Positions tyrosine 114–glutamine 212 are coil 1B. The interval leucine 213–aspartate 228 is linker 12. The tract at residues leucine 229 to glutamate 250 is coil 2A. Residues threonine 251–tryptophan 254 are linker 2. Residues tyrosine 255–isoleucine 375 are coil 2B. Serine 267 is subject to Phosphoserine. Residue arginine 268 is modified to Citrulline. Serine 321 carries the phosphoserine modification. The tract at residues threonine 376–methionine 430 is tail. Residue threonine 381 is modified to Phosphothreonine. Serine 383 bears the Phosphoserine mark. Arginine 404 and arginine 414 each carry citrulline.

Belongs to the intermediate filament family. As to quaternary structure, interacts with SYNM. In terms of assembly, interacts with PSEN1 (via N-terminus). Phosphorylated by PKN1. As to expression, expressed in the cortex and hippocampus. Expression decreases following acute and chronic corticosterone treatment.

It is found in the cytoplasm. GFAP, a class-III intermediate filament, is a cell-specific marker that, during the development of the central nervous system, distinguishes astrocytes from other glial cells. In Rattus norvegicus (Rat), this protein is Glial fibrillary acidic protein (Gfap).